A 151-amino-acid chain; its full sequence is Large ribosomal subunit protein uL16 (151 aa).

The protein belongs to the universal ribosomal protein uL16 family. As to quaternary structure, part of the 50S ribosomal subunit.

In terms of biological role, binds 23S rRNA and is also seen to make contacts with the A and possibly P site tRNAs. The chain is Large ribosomal subunit protein uL16 from Chloroflexus aurantiacus (strain ATCC 29364 / DSM 637 / Y-400-fl).